We begin with the raw amino-acid sequence, 491 residues long: Probable cytosol aminopeptidase (491 aa).

Mn(2+)-binding residues include K261 and D266. The active site involves K273. Mn(2+)-binding residues include D285, D344, and E346. R348 is a catalytic residue.

Belongs to the peptidase M17 family. Requires Mn(2+) as cofactor.

It is found in the cytoplasm. It catalyses the reaction Release of an N-terminal amino acid, Xaa-|-Yaa-, in which Xaa is preferably Leu, but may be other amino acids including Pro although not Arg or Lys, and Yaa may be Pro. Amino acid amides and methyl esters are also readily hydrolyzed, but rates on arylamides are exceedingly low.. The catalysed reaction is Release of an N-terminal amino acid, preferentially leucine, but not glutamic or aspartic acids.. Presumably involved in the processing and regular turnover of intracellular proteins. Catalyzes the removal of unsubstituted N-terminal amino acids from various peptides. The chain is Probable cytosol aminopeptidase from Picosynechococcus sp. (strain ATCC 27264 / PCC 7002 / PR-6) (Agmenellum quadruplicatum).